A 342-amino-acid chain; its full sequence is Cystein proteinase inhibitor protein salarin (342 aa).

The signal sequence occupies residues 1–19 (MKSLVLLLLVAVTVSSVVS). Asn153 is a glycosylation site (N-linked (GlcNAc) asparagine). O-linked (GlcNAc) threonine glycosylation is present at Thr184.

In terms of processing, N-glycosylated, with sialylated biantennary complex-type glycans. O-glycosylated, with sialylated oligosaccharides.

The protein localises to the cytoplasm. It localises to the vacuole. Its function is as follows. Inhibits papain and ficin (cysteine proteinases) but not trypsin (a serine proteinase). This is Cystein proteinase inhibitor protein salarin (salarin) from Salvelinus alpinus (Arctic char).